Here is a 611-residue protein sequence, read N- to C-terminus: Rho GTPase-activating protein gacN (611 aa).

The region spanning Lys24 to Tyr219 is the Rho-GAP domain. Positions Ile236–Ser499 form a coiled coil. Residues Asn476–Lys491 are compositionally biased toward basic and acidic residues. A disordered region spans residues Asn476 to Asp550. Low complexity-rich tracts occupy residues Ser495–Ser509 and Thr527–Pro540.

It is found in the cytoplasm. In terms of biological role, rho GTPase-activating protein involved in the signal transduction pathway. The sequence is that of Rho GTPase-activating protein gacN (gacN) from Dictyostelium discoideum (Social amoeba).